Reading from the N-terminus, the 391-residue chain is Glycosyltransferase afumC (391 aa).

The protein belongs to the afumC glycosyltransferase family.

It functions in the pathway secondary metabolite biosynthesis. Activity is significantly decreased by addition of divalent cations such as Mg(2+), Mn(2+), Zn(2+), Ca(2+), Co(2+), Cu(2+), and Ni(2+); while Fe(2+) has little effect. In terms of biological role, glycosyltransferase; part of the gene cluster that mediates the biosynthesis fumihopaside A, a hopane-type glucoside that enhances the thermotolerance and UV resistance of N.fumigata. The first step of fumihopaside A biosynthesis is performed by the squalene hopane cyclase afumA that catalyzes the cyclization of 3S-oxidosqualene into the hopene 21-beta-H-hopane-3-beta,22-diol. The cytochrome P450 monooxygenase afumB is responsible for both hydroxylation at C-24 and oxidations at C-30 of the afumA product. The glycosyltransferase afumC then catalyzes the glycosylation at C-24, using UDP-D-glucose as a donor, to produce fumihopaside A. AfumC is also able to accept UDP-D-galactose and UDP-D-glucuronic acid as donors to yield minor derivatives. Fumihopaside B, another minor derivative produced, is different from fumihopaside A due to the presence of a double bond between C-22 and C-29. This Aspergillus fumigatus (strain CBS 144.89 / FGSC A1163 / CEA10) (Neosartorya fumigata) protein is Glycosyltransferase afumC.